The primary structure comprises 359 residues: Non-classical arabinogalactan protein 31 (359 aa).

The N-terminal stretch at 1–24 (MGFIGKSVLVSLVALWCFTSSVFT) is a signal peptide. The disordered stretch occupies residues 31 to 215 (TQTPSLAPAP…PPVSPPTKPP (185 aa)). Positions 44–66 (HHGHHHPHPPHHHHPHPHPHPHP) are enriched in basic residues. Residues 67–215 (PAKSPVKPPV…PPVSPPTKPP (149 aa)) show a composition bias toward pro residues. A 4-hydroxyproline mark is found at Pro71, Pro75, Pro79, Pro82, Pro83, Pro87, Pro91, Pro95, Pro99, Pro103, Pro107, Pro111, Pro114, Pro115, Pro119, Pro123, Pro127, Pro131, Pro135, Pro139, Pro143, Pro147, Pro151, Pro155, Pro159, Pro163, Pro167, Pro171, Pro175, Pro179, Pro183, Pro186, Pro187, Pro191, Pro195, Pro199, Pro203, Pro207, Pro210, Pro211, Pro215, and Pro219. Residues Pro71, Pro75, Pro79, Pro82, Pro83, Pro87, Pro91, Pro95, Pro99, Pro103, Pro107, Pro111, Pro114, Pro115, Pro119, Pro123, Pro127, Pro131, Pro135, Pro139, Pro143, Pro147, Pro151, Pro155, Pro159, Pro163, Pro167, Pro171, Pro175, Pro179, Pro183, Pro186, Pro187, Pro191, Pro195, Pro199, Pro203, Pro207, Pro210, Pro211, Pro215, and Pro219 are each glycosylated (O-linked (Ara...) hydroxyproline). Repeat 1 spans residues 90–109 (PPVYPPTKAPVKPPTKPPVK). 3 repeat units span residues 122–141 (PPVY…PPVK), 142–161 (PPVY…PPVK), and 162–181 (PPVY…PPVK). N-linked (GlcNAc...) asparagine glycans are attached at residues Asn226 and Asn269.

This sequence belongs to the non-classical AGP family. Hydroxylated on numerous prolines in the proline-rich region. Post-translationally, O-glycosylated on numerous hydroxyprolines in the proline-rich region; noncontiguous hydroxylproline residues are glycosylated with arabinogalactan. In terms of tissue distribution, expressed in vascular bundles of roots, leaves, sepals and stamen filaments, and pistils but not stigma.

The protein localises to the secreted. Its subcellular location is the cell wall. In terms of biological role, proteoglycan that may contribute to the strengthening of cell walls. The sequence is that of Non-classical arabinogalactan protein 31 from Arabidopsis thaliana (Mouse-ear cress).